A 33-amino-acid polypeptide reads, in one-letter code: Alpha-amanitin proprotein 2 (33 aa).

Residues 1-10 constitute a propeptide that is removed on maturation; that stretch reads MSDINATRLP. A (3R,4R)-4,5-dihydroxyisoleucine; in form alpha-amanitin modification is found at Ile11. Ile11 bears the (3R,4S)-4-hydroxyisoleucine; in form gamma-amanitin mark. The cyclopeptide (Ile-Pro) cross-link spans 11–18; sequence IWGIGCNP. The 2'-cysteinyl-6'-hydroxytryptophan sulfoxide (Trp-Cys) cross-link spans 12 to 16; it reads WGIGC. Pro18 bears the 4-hydroxyproline mark. The propeptide occupies 19 to 33; sequence CVGDDVTSVLTRGEA.

This sequence belongs to the MSDIN fungal toxin family. In terms of processing, processed by the macrocyclase-peptidase enzyme POPB to yield a toxic cyclic octapeptide. POPB first removes 10 residues from the N-terminus. Conformational trapping of the remaining peptide forces the enzyme to release this intermediate rather than proceed to macrocyclization. The enzyme rebinds the remaining peptide in a different conformation and catalyzes macrocyclization of the N-terminal 8 residues. As to expression, expressed in basidiocarps.

In terms of biological role, major toxin belonging to the bicyclic octapeptides amatoxins that acts by binding non-competitively to RNA polymerase II and greatly slowing the elongation of transcripts from target promoters. The sequence is that of Alpha-amanitin proprotein 2 from Amanita exitialis (Guangzhou destroying angel).